Consider the following 270-residue polypeptide: Putative phosphoenolpyruvate synthase regulatory protein (270 aa).

150 to 157 (GVSRCGKT) lines the ADP pocket.

It belongs to the pyruvate, phosphate/water dikinase regulatory protein family. PSRP subfamily.

The enzyme catalyses [pyruvate, water dikinase] + ADP = [pyruvate, water dikinase]-phosphate + AMP + H(+). It catalyses the reaction [pyruvate, water dikinase]-phosphate + phosphate + H(+) = [pyruvate, water dikinase] + diphosphate. Its function is as follows. Bifunctional serine/threonine kinase and phosphorylase involved in the regulation of the phosphoenolpyruvate synthase (PEPS) by catalyzing its phosphorylation/dephosphorylation. The chain is Putative phosphoenolpyruvate synthase regulatory protein from Shewanella oneidensis (strain ATCC 700550 / JCM 31522 / CIP 106686 / LMG 19005 / NCIMB 14063 / MR-1).